A 356-amino-acid polypeptide reads, in one-letter code: NADH-quinone oxidoreductase subunit H (356 aa).

9 helical membrane passes run 17 to 37, 51 to 71, 83 to 103, 116 to 136, 162 to 182, 202 to 222, 261 to 281, 295 to 315, and 334 to 354; these read TGGI…LLLA, PNVV…KFVL, VVFI…WAVV, VGIL…IMGG, IGLI…STIV, LVLL…ALAE, IVLM…PGFP, LFLA…FAMA, and VFLP…VFGP.

It belongs to the complex I subunit 1 family. NDH-1 is composed of 14 different subunits. Subunits NuoA, H, J, K, L, M, N constitute the membrane sector of the complex.

Its subcellular location is the cell inner membrane. The enzyme catalyses a quinone + NADH + 5 H(+)(in) = a quinol + NAD(+) + 4 H(+)(out). In terms of biological role, NDH-1 shuttles electrons from NADH, via FMN and iron-sulfur (Fe-S) centers, to quinones in the respiratory chain. The immediate electron acceptor for the enzyme in this species is believed to be ubiquinone. Couples the redox reaction to proton translocation (for every two electrons transferred, four hydrogen ions are translocated across the cytoplasmic membrane), and thus conserves the redox energy in a proton gradient. This subunit may bind ubiquinone. The chain is NADH-quinone oxidoreductase subunit H from Caulobacter vibrioides (strain ATCC 19089 / CIP 103742 / CB 15) (Caulobacter crescentus).